The chain runs to 186 residues: uncharacterized protein (186 aa).

The next 3 membrane-spanning stretches (helical) occupy residues 43–63, 69–89, and 143–163; these read GAWVIHIVLIAALRLIFHAIP, LAWTLTNLTYMAGSFIMFHWV, and WMFLVNIWALFMVLIPKLPAV.

The protein resides in the endoplasmic reticulum membrane. This is an uncharacterized protein from Schizosaccharomyces pombe (strain 972 / ATCC 24843) (Fission yeast).